A 126-amino-acid chain; its full sequence is Acidic phospholipase A2 2 (126 aa).

A propeptide spanning residues serine 1–leucine 7 is cleaved from the precursor. Disulfide bonds link cysteine 18–cysteine 78, cysteine 33–cysteine 125, cysteine 35–cysteine 51, cysteine 50–cysteine 106, cysteine 57–cysteine 99, cysteine 67–cysteine 92, and cysteine 85–cysteine 97. The Ca(2+) site is built by tyrosine 34, glycine 36, and glycine 38. Histidine 54 is a catalytic residue. Position 55 (aspartate 55) interacts with Ca(2+). Aspartate 100 is an active-site residue.

It belongs to the phospholipase A2 family. Group I subfamily. D49 sub-subfamily. In terms of assembly, heterodimer formed between two homologous isoforms: isoform 1 and isoform 2. Requires Ca(2+) as cofactor. As to expression, expressed by the venom gland.

The protein localises to the secreted. It carries out the reaction a 1,2-diacyl-sn-glycero-3-phosphocholine + H2O = a 1-acyl-sn-glycero-3-phosphocholine + a fatty acid + H(+). PLA2 catalyzes the calcium-dependent hydrolysis of the 2-acyl groups in 3-sn-phosphoglycerides. This chain is Acidic phospholipase A2 2, found in Naja sagittifera (Andaman cobra).